The following is a 326-amino-acid chain: Homocysteine S-methyltransferase 1 (326 aa).

Residues 9–323 (LLEDLIKKCG…STINAISRDL (315 aa)) form the Hcy-binding domain. The Zn(2+) site is built by cysteine 241, cysteine 308, and cysteine 309.

In terms of assembly, monomer. The cofactor is Zn(2+). In terms of tissue distribution, expressed predominantly in roots. Expressed in rosette leaves, cauline leaves and developing seeds.

It carries out the reaction S-methyl-L-methionine + L-homocysteine = 2 L-methionine + H(+). With respect to regulation, strongly inhibited by methionine. Catalyzes methyl transfer from S-methylmethionine (SMM) to adenosyl-L-homocysteine (AdoMet). SMM degradation (by HMT-1, HMT-2 and HMT-3) and biosynthesis (by MMT1) constitute the SMM cycle in plants, which is probably required to achieve short term control of AdoMet level. The protein is Homocysteine S-methyltransferase 1 (HMT-1) of Arabidopsis thaliana (Mouse-ear cress).